Reading from the N-terminus, the 174-residue chain is Crossover junction endodeoxyribonuclease RuvC (174 aa).

Residues Asp8, Glu67, and Asp139 contribute to the active site. Residues Asp8, Glu67, and Asp139 each coordinate Mg(2+).

The protein belongs to the RuvC family. In terms of assembly, homodimer which binds Holliday junction (HJ) DNA. The HJ becomes 2-fold symmetrical on binding to RuvC with unstacked arms; it has a different conformation from HJ DNA in complex with RuvA. In the full resolvosome a probable DNA-RuvA(4)-RuvB(12)-RuvC(2) complex forms which resolves the HJ. Mg(2+) serves as cofactor.

The protein resides in the cytoplasm. It catalyses the reaction Endonucleolytic cleavage at a junction such as a reciprocal single-stranded crossover between two homologous DNA duplexes (Holliday junction).. The RuvA-RuvB-RuvC complex processes Holliday junction (HJ) DNA during genetic recombination and DNA repair. Endonuclease that resolves HJ intermediates. Cleaves cruciform DNA by making single-stranded nicks across the HJ at symmetrical positions within the homologous arms, yielding a 5'-phosphate and a 3'-hydroxyl group; requires a central core of homology in the junction. The consensus cleavage sequence is 5'-(A/T)TT(C/G)-3'. Cleavage occurs on the 3'-side of the TT dinucleotide at the point of strand exchange. HJ branch migration catalyzed by RuvA-RuvB allows RuvC to scan DNA until it finds its consensus sequence, where it cleaves and resolves the cruciform DNA. The chain is Crossover junction endodeoxyribonuclease RuvC from Pseudomonas putida (strain W619).